Here is a 134-residue protein sequence, read N- to C-terminus: Nogalonic acid methyl ester cyclase (134 aa).

Gln-95 serves as a coordination point for nogalaviketone. Asp-111 (proton donor/acceptor) is an active-site residue.

Belongs to the polyketide cyclase DnrD family. In terms of assembly, homotetramer. Dimer of dimers.

The catalysed reaction is nogalaviketone = methyl nogalonate. It functions in the pathway antibiotic biosynthesis. In terms of biological role, involved in the biosynthesis of the aromatic polyketide antibiotic nogalamycin. Catalyzes the formation of nogalaviketone from nogalonic acid methyl ester (NAME), the last ring-closure step in the biosynthesis of nogalamycin. The chain is Nogalonic acid methyl ester cyclase from Streptomyces nogalater.